The sequence spans 177 residues: ATP synthase subunit delta (177 aa).

This sequence belongs to the ATPase delta chain family. In terms of assembly, F-type ATPases have 2 components, F(1) - the catalytic core - and F(0) - the membrane proton channel. F(1) has five subunits: alpha(3), beta(3), gamma(1), delta(1), epsilon(1). F(0) has three main subunits: a(1), b(2) and c(10-14). The alpha and beta chains form an alternating ring which encloses part of the gamma chain. F(1) is attached to F(0) by a central stalk formed by the gamma and epsilon chains, while a peripheral stalk is formed by the delta and b chains.

It is found in the cell membrane. Its function is as follows. F(1)F(0) ATP synthase produces ATP from ADP in the presence of a proton or sodium gradient. F-type ATPases consist of two structural domains, F(1) containing the extramembraneous catalytic core and F(0) containing the membrane proton channel, linked together by a central stalk and a peripheral stalk. During catalysis, ATP synthesis in the catalytic domain of F(1) is coupled via a rotary mechanism of the central stalk subunits to proton translocation. In terms of biological role, this protein is part of the stalk that links CF(0) to CF(1). It either transmits conformational changes from CF(0) to CF(1) or is implicated in proton conduction. This Streptococcus suis (strain 98HAH33) protein is ATP synthase subunit delta.